A 496-amino-acid chain; its full sequence is ATP-dependent protease ATPase subunit HslU2 (496 aa).

The N-terminal 10 residues, 1-10 (MIRFSWVRLC), are a transit peptide targeting the mitochondrion. Residues Val-51 and 94 to 99 (GVGKTE) each bind ATP. The span at 177 to 191 (GSFGSSTRNSGSGDS) shows a compositional bias: low complexity. A disordered region spans residues 177–204 (GSFGSSTRNSGSGDSSAEEDKNSSSRDN). The ATP site is built by Asp-308, Glu-374, and Arg-446.

The protein belongs to the ClpX chaperone family. HslU subfamily. A double ring-shaped homohexamer of HslV is capped on each side by a ring-shaped HslU homohexamer. The assembly of the HslU/HslV complex (HslVU) is dependent on binding of ATP.

It is found in the mitochondrion matrix. It localises to the kinetoplast. In terms of biological role, ATPase subunit of a proteasome-like degradation complex; this subunit has chaperone activity. The binding of ATP and its subsequent hydrolysis by HslU are essential for unfolding of protein substrates subsequently hydrolyzed by HslV. HslU recognizes the N-terminal part of its protein substrates and unfolds these before they are guided to HslV for hydrolysis. The HslVU protease complex functions in mitochondrial DNA replication by regulating DNA helicase PIF2 protein levels. The chain is ATP-dependent protease ATPase subunit HslU2 (HslU2) from Trypanosoma brucei brucei (strain 927/4 GUTat10.1).